The chain runs to 107 residues: Iron-binding protein IscA (107 aa).

Positions 35, 99, and 101 each coordinate Fe cation.

It belongs to the HesB/IscA family. Homodimer; may form tetramers and higher multimers. Fe cation is required as a cofactor.

Is able to transfer iron-sulfur clusters to apo-ferredoxin. Multiple cycles of [2Fe2S] cluster formation and transfer are observed, suggesting that IscA acts catalytically. Recruits intracellular free iron so as to provide iron for the assembly of transient iron-sulfur cluster in IscU in the presence of IscS, L-cysteine and the thioredoxin reductase system TrxA/TrxB. The polypeptide is Iron-binding protein IscA (Yersinia enterocolitica serotype O:8 / biotype 1B (strain NCTC 13174 / 8081)).